The sequence spans 461 residues: PE-PGRS family protein PE_PGRS45 (461 aa).

One can recognise a PE domain in the interval 4-92 (VNVAPQLVST…GSTYAVAEAA (89 aa)). Disordered regions lie at residues 232 to 251 (GGAG…GGNG) and 426 to 461 (AGSL…GADG). Positions 434–446 (PGFGGPGGSGGAS) are enriched in gly residues.

Belongs to the mycobacterial PE family. PGRS subfamily. As to quaternary structure, interacts with human TIMM23, which is part of a complex that mediates the translocation of transit peptide-containing proteins across the mitochondrial inner membrane.

Its subcellular location is the cell membrane. The protein localises to the secreted. It localises to the cell wall. It is found in the host mitochondrion. The enzyme catalyses hexadecanal + NADP(+) + CoA = hexadecanoyl-CoA + NADPH + H(+). Oxidoreductase activity is inhibited by the first line anti-tubercular drug isoniazid (INH). May be an effector protein that contributes to pathogenesis by targeting host mitochondria, where it modulates host cellular processes. In THP1 macrophages, increases the ADP-to-ATP ratio and increases the cellular ROS levels. Also induces mitochondrial perturbations through membrane depolarization, release of mitochondrial superoxide, up-regulation of expression of host proapoptotic proteins (BAX and BIM) and release of cytochrome C into the cytosol. May bind calcium to increase intracellular calcium influx, which may further lead to mitochondrial perturbations. Mitochondrial perturbations and alteration of Ca(2+) influx are independent but simultaneous events. Functionally, in vitro, shows NADPH-dependent fatty acyl coenzyme A oxidoreductase activity. Can oxidize palmitoyl-CoA, but not glutathione and thiourea. The sequence is that of PE-PGRS family protein PE_PGRS45 from Mycobacterium tuberculosis (strain ATCC 25618 / H37Rv).